A 290-amino-acid polypeptide reads, in one-letter code: Shikimate dehydrogenase (NADP(+)) (290 aa).

Shikimate is bound by residues 18-20 (SYS) and T66. Residue K70 is the Proton acceptor of the active site. The shikimate site is built by N91 and D106. Residues 130-134 (GNGGA) and M230 each bind NADP(+). Y232 contributes to the shikimate binding site. An NADP(+)-binding site is contributed by G253.

Belongs to the shikimate dehydrogenase family. In terms of assembly, homodimer.

It catalyses the reaction shikimate + NADP(+) = 3-dehydroshikimate + NADPH + H(+). It functions in the pathway metabolic intermediate biosynthesis; chorismate biosynthesis; chorismate from D-erythrose 4-phosphate and phosphoenolpyruvate: step 4/7. Its function is as follows. Involved in the biosynthesis of the chorismate, which leads to the biosynthesis of aromatic amino acids. Catalyzes the reversible NADPH linked reduction of 3-dehydroshikimate (DHSA) to yield shikimate (SA). The chain is Shikimate dehydrogenase (NADP(+)) from Prosthecochloris aestuarii (strain DSM 271 / SK 413).